The chain runs to 158 residues: Protein Smg homolog (158 aa).

It belongs to the Smg family.

The chain is Protein Smg homolog from Herminiimonas arsenicoxydans.